A 247-amino-acid chain; its full sequence is Probable transcriptional regulatory protein TDE_1487 (247 aa).

Belongs to the TACO1 family.

The protein resides in the cytoplasm. The polypeptide is Probable transcriptional regulatory protein TDE_1487 (Treponema denticola (strain ATCC 35405 / DSM 14222 / CIP 103919 / JCM 8153 / KCTC 15104)).